The sequence spans 335 residues: N-acetyl-gamma-glutamyl-phosphate reductase (335 aa).

The active site involves C155.

The protein belongs to the NAGSA dehydrogenase family. Type 1 subfamily.

The protein localises to the cytoplasm. It catalyses the reaction N-acetyl-L-glutamate 5-semialdehyde + phosphate + NADP(+) = N-acetyl-L-glutamyl 5-phosphate + NADPH + H(+). Its pathway is amino-acid biosynthesis; L-arginine biosynthesis; N(2)-acetyl-L-ornithine from L-glutamate: step 3/4. Functionally, catalyzes the NADPH-dependent reduction of N-acetyl-5-glutamyl phosphate to yield N-acetyl-L-glutamate 5-semialdehyde. The sequence is that of N-acetyl-gamma-glutamyl-phosphate reductase from Pasteurella multocida (strain Pm70).